Here is a 142-residue protein sequence, read N- to C-terminus: Small ribosomal subunit protein uS12 (142 aa).

The segment at 1–43 (MPTFNQLVRKGRKVIEKKSNSPALQKGFNSKKKKPTDVNSPQK) is disordered. Position 102 is a 3-methylthioaspartic acid (Asp-102).

The protein belongs to the universal ribosomal protein uS12 family. Part of the 30S ribosomal subunit. Contacts proteins S8 and S17. May interact with IF1 in the 30S initiation complex.

With S4 and S5 plays an important role in translational accuracy. Functionally, interacts with and stabilizes bases of the 16S rRNA that are involved in tRNA selection in the A site and with the mRNA backbone. Located at the interface of the 30S and 50S subunits, it traverses the body of the 30S subunit contacting proteins on the other side and probably holding the rRNA structure together. The combined cluster of proteins S8, S12 and S17 appears to hold together the shoulder and platform of the 30S subunit. The chain is Small ribosomal subunit protein uS12 from Ruminiclostridium cellulolyticum (strain ATCC 35319 / DSM 5812 / JCM 6584 / H10) (Clostridium cellulolyticum).